The primary structure comprises 76 residues: ATP synthase subunit 9, mitochondrial (76 aa).

At methionine 1 the chain carries N-formylmethionine. Transmembrane regions (helical) follow at residues 14–34 (LASI…AALI) and 52–72 (ILGF…AFLL).

F-type ATP synthases have 2 components, the catalytic core F(1) and the membrane-embedded component F(0), linked together by a central stalk and a peripheral stalk. The central stalk, also called rotor shaft, is often seen as part of F(1). The peripheral stalk is seen as part of F(0). F(0) contains the membrane channel next to the rotor. F-type ATP synthases form dimers but each monomer functions independently in ATP generation. The dimer consists of 17 different polypeptides: ATP1 (subunit alpha, 3 molecules per monomer, part of F(1)), ATP2 (subunit beta, 3 copies per monomer, part of F(1)), ATP3 (subunit gamma, part of the central stalk), ATP4 (subunit b, part of the peripheral stalk), ATP5/OSCP (subunit 5/OSCP, part of the peripheral stalk), ATP6 (subunit a, part of the peripheral stalk), ATP7 (subunit d, part of the peripheral stalk), ATP8 (subunit 8, part of the peripheral stalk), OLI1 (subunit c, part of the rotor, 10 molecules per monomer), ATP14 (subunit h, part of the peripheral stalk), ATP15 (subunit epsilon, part of the central stalk), ATP16 (subunit delta, part of the central stalk), ATP17 (subunit f, part of the peripheral stalk), ATP18 (subunit i/j, part of the peripheral stalk), ATP19 (subunit k, dimer-specific, at interface between monomers), ATP20 (subunit g, at interface between monomers), TIM11 (subunit e, at interface between monomers).

It is found in the mitochondrion inner membrane. Its function is as follows. Mitochondrial membrane ATP synthase (F(1)F(0) ATP synthase or Complex V) produces ATP from ADP in the presence of a proton gradient across the membrane which is generated by electron transport complexes of the respiratory chain. F-type ATP synthases consist of two structural domains, F(1) - containing the extramembraneous catalytic core, and F(0) - containing the membrane proton channel, linked together by a central stalk and a peripheral stalk. During catalysis, ATP synthesis in the catalytic domain of F(1) is coupled via a rotary mechanism of the central stalk subunits to proton translocation. Part of the complex F(0) domain. A homomeric c-ring of 10 OLI1/ATP9 subunits is part of the complex rotary element. The polypeptide is ATP synthase subunit 9, mitochondrial (Yarrowia lipolytica (strain CLIB 122 / E 150) (Yeast)).